The primary structure comprises 124 residues: Small ribosomal subunit protein uS12 (124 aa).

The segment at 1–20 (MPTIQQLVRKGRTPKVVKTK) is disordered. Residues 9-18 (RKGRTPKVVK) show a composition bias toward basic residues. Asp89 carries the post-translational modification 3-methylthioaspartic acid.

The protein belongs to the universal ribosomal protein uS12 family. In terms of assembly, part of the 30S ribosomal subunit. Contacts proteins S8 and S17. May interact with IF1 in the 30S initiation complex.

Its function is as follows. With S4 and S5 plays an important role in translational accuracy. Functionally, interacts with and stabilizes bases of the 16S rRNA that are involved in tRNA selection in the A site and with the mRNA backbone. Located at the interface of the 30S and 50S subunits, it traverses the body of the 30S subunit contacting proteins on the other side and probably holding the rRNA structure together. The combined cluster of proteins S8, S12 and S17 appears to hold together the shoulder and platform of the 30S subunit. The protein is Small ribosomal subunit protein uS12 of Clavibacter michiganensis subsp. michiganensis (strain NCPPB 382).